Reading from the N-terminus, the 406-residue chain is Tyrosine--tRNA ligase (406 aa).

Residue Tyr35 participates in L-tyrosine binding. The 'HIGH' region signature appears at Pro40–His49. Positions 168 and 172 each coordinate L-tyrosine. The short motif at Lys228–Thr232 is the 'KMSKS' region element. Lys231 contacts ATP. The S4 RNA-binding domain maps to Ser340–Val404.

The protein belongs to the class-I aminoacyl-tRNA synthetase family. TyrS type 1 subfamily. Homodimer.

The protein resides in the cytoplasm. The catalysed reaction is tRNA(Tyr) + L-tyrosine + ATP = L-tyrosyl-tRNA(Tyr) + AMP + diphosphate + H(+). Functionally, catalyzes the attachment of tyrosine to tRNA(Tyr) in a two-step reaction: tyrosine is first activated by ATP to form Tyr-AMP and then transferred to the acceptor end of tRNA(Tyr). This chain is Tyrosine--tRNA ligase, found in Clostridium perfringens (strain SM101 / Type A).